Reading from the N-terminus, the 55-residue chain is Large ribosomal subunit protein bL33 (55 aa).

This sequence belongs to the bacterial ribosomal protein bL33 family.

In Paramagnetospirillum magneticum (strain ATCC 700264 / AMB-1) (Magnetospirillum magneticum), this protein is Large ribosomal subunit protein bL33.